Reading from the N-terminus, the 90-residue chain is Small ribosomal subunit protein bS20 (90 aa).

A compositionally biased stretch (basic residues) spans 1–15; sequence MANHKSAQKRIRQTK. Positions 1 to 22 are disordered; sequence MANHKSAQKRIRQTKTRTERNR.

This sequence belongs to the bacterial ribosomal protein bS20 family.

Its function is as follows. Binds directly to 16S ribosomal RNA. The polypeptide is Small ribosomal subunit protein bS20 (Helicobacter hepaticus (strain ATCC 51449 / 3B1)).